The sequence spans 219 residues: GTP cyclohydrolase-2 (219 aa).

51 to 55 (RIHSE) serves as a coordination point for GTP. 3 residues coordinate Zn(2+): Cys56, Cys67, and Cys69. GTP-binding positions include Gln72, 94–96 (EGR), and Thr116. Asp128 serves as the catalytic Proton acceptor. Arg130 (nucleophile) is an active-site residue. GTP-binding residues include Thr151 and Lys156.

Belongs to the GTP cyclohydrolase II family. The cofactor is Zn(2+).

The catalysed reaction is GTP + 4 H2O = 2,5-diamino-6-hydroxy-4-(5-phosphoribosylamino)-pyrimidine + formate + 2 phosphate + 3 H(+). Its pathway is cofactor biosynthesis; riboflavin biosynthesis; 5-amino-6-(D-ribitylamino)uracil from GTP: step 1/4. Its function is as follows. Catalyzes the conversion of GTP to 2,5-diamino-6-ribosylamino-4(3H)-pyrimidinone 5'-phosphate (DARP), formate and pyrophosphate. This is GTP cyclohydrolase-2 from Pasteurella multocida (strain Pm70).